We begin with the raw amino-acid sequence, 478 residues long: Kynurenine 3-monooxygenase (478 aa).

FAD is bound by residues Val-19, 37-40 (YEAR), and Ala-57. L-kynurenine is bound by residues Arg-85 and Tyr-99. FAD contacts are provided by residues Arg-111, Leu-136, Thr-172, Asp-304, and 317-318 (MN). Residues Asn-363 and Tyr-398 each coordinate L-kynurenine. Helical transmembrane passes span 385–404 (FLHA…VAFT) and 425–445 (GLFV…VHHL).

The protein belongs to the aromatic-ring hydroxylase family. KMO subfamily. Requires FAD as cofactor. In terms of tissue distribution, highest activity in liver and kidney. Low activity in spleen, stomach, intestinal tract, esophagus, heart and lung.

Its subcellular location is the mitochondrion outer membrane. The catalysed reaction is L-kynurenine + NADPH + O2 + H(+) = 3-hydroxy-L-kynurenine + NADP(+) + H2O. Its pathway is cofactor biosynthesis; NAD(+) biosynthesis; quinolinate from L-kynurenine: step 1/3. Catalyzes the hydroxylation of L-kynurenine (L-Kyn) to form 3-hydroxy-L-kynurenine (L-3OHKyn). Required for synthesis of quinolinic acid, a neurotoxic NMDA receptor antagonist and potential endogenous inhibitor of NMDA receptor signaling in axonal targeting, synaptogenesis and apoptosis during brain development. Quinolinic acid may also affect NMDA receptor signaling in pancreatic beta cells, osteoblasts, myocardial cells, and the gastrointestinal tract. The protein is Kynurenine 3-monooxygenase of Rattus norvegicus (Rat).